The primary structure comprises 115 residues: U3-lycotoxin-Ls1k (115 aa).

The first 20 residues, methionine 1–alanine 20, serve as a signal peptide directing secretion. The propeptide occupies glutamate 21–arginine 44. Intrachain disulfides connect cysteine 48-cysteine 63, cysteine 55-cysteine 72, cysteine 62-cysteine 87, and cysteine 74-cysteine 85.

This sequence belongs to the neurotoxin 19 (CSTX) family. 01 subfamily. As to expression, expressed by the venom gland.

The protein resides in the secreted. This Lycosa singoriensis (Wolf spider) protein is U3-lycotoxin-Ls1k.